The sequence spans 196 residues: DnaA initiator-associating protein DiaA (196 aa).

The SIS domain maps to 34–196 (MVQSLLNGNK…DNTLFPHQND (163 aa)).

The protein belongs to the SIS family. DiaA subfamily. Homotetramer; dimer of dimers.

Required for the timely initiation of chromosomal replication via direct interactions with the DnaA initiator protein. The protein is DnaA initiator-associating protein DiaA of Pectobacterium carotovorum subsp. carotovorum (strain PC1).